The sequence spans 544 residues: CTP synthase (544 aa).

The amidoligase domain stretch occupies residues 1–267; the sequence is MAKFVFITGG…CREVLDVLDL (267 aa). S13 contacts CTP. S13 is a binding site for UTP. ATP contacts are provided by residues 14-19 and D71; that span reads SIGKGI. Positions 71 and 141 each coordinate Mg(2+). CTP-binding positions include 148–150, 188–193, and K224; these read DIE and KTKPTQ. Residues 188–193 and K224 each bind UTP; that span reads KTKPTQ. Residues 292 to 534 form the Glutamine amidotransferase type-1 domain; it reads KVALVGKYIQ…IEAAQQRLPS (243 aa). L-glutamine is bound at residue G354. The active-site Nucleophile; for glutamine hydrolysis is the C381. Residues 382-385, E405, and R462 contribute to the L-glutamine site; that span reads LGMQ. Catalysis depends on residues H507 and E509.

This sequence belongs to the CTP synthase family. Homotetramer.

The enzyme catalyses UTP + L-glutamine + ATP + H2O = CTP + L-glutamate + ADP + phosphate + 2 H(+). The catalysed reaction is L-glutamine + H2O = L-glutamate + NH4(+). It carries out the reaction UTP + NH4(+) + ATP = CTP + ADP + phosphate + 2 H(+). Its pathway is pyrimidine metabolism; CTP biosynthesis via de novo pathway; CTP from UDP: step 2/2. With respect to regulation, allosterically activated by GTP, when glutamine is the substrate; GTP has no effect on the reaction when ammonia is the substrate. The allosteric effector GTP functions by stabilizing the protein conformation that binds the tetrahedral intermediate(s) formed during glutamine hydrolysis. Inhibited by the product CTP, via allosteric rather than competitive inhibition. Catalyzes the ATP-dependent amination of UTP to CTP with either L-glutamine or ammonia as the source of nitrogen. Regulates intracellular CTP levels through interactions with the four ribonucleotide triphosphates. This chain is CTP synthase, found in Parasynechococcus marenigrum (strain WH8102).